The sequence spans 122 residues: Large ribosomal subunit protein uL22 (122 aa).

Belongs to the universal ribosomal protein uL22 family. In terms of assembly, part of the 50S ribosomal subunit.

In terms of biological role, this protein binds specifically to 23S rRNA; its binding is stimulated by other ribosomal proteins, e.g. L4, L17, and L20. It is important during the early stages of 50S assembly. It makes multiple contacts with different domains of the 23S rRNA in the assembled 50S subunit and ribosome. Its function is as follows. The globular domain of the protein is located near the polypeptide exit tunnel on the outside of the subunit, while an extended beta-hairpin is found that lines the wall of the exit tunnel in the center of the 70S ribosome. This is Large ribosomal subunit protein uL22 from Caldicellulosiruptor saccharolyticus (strain ATCC 43494 / DSM 8903 / Tp8T 6331).